A 166-amino-acid chain; its full sequence is Antibacterial peptide PMAP-36 (166 aa).

Residues 1–29 (METQRASLCLGRWSLWLLLLGLVVPSASA) form the signal peptide. A propeptide spanning residues 30-129 (QALSYREAVL…LDINCDEIQS (100 aa)) is cleaved from the precursor. Intrachain disulfides connect C85-C96 and C107-C124.

It belongs to the cathelicidin family.

It localises to the secreted. Its function is as follows. Exerts antimicrobial activity against both Gram-positive and negative bacteria. Its activity appears to be mediated by its ability to damage bacterial membranes. In Sus scrofa (Pig), this protein is Antibacterial peptide PMAP-36 (PMAP36).